The chain runs to 503 residues: Dentin matrix acidic phosphoprotein 1 (503 aa).

The N-terminal stretch at 1–16 (MKTVILLVFLWGLSCA) is a signal peptide. Residues 23 to 35 (HNTESESSEERTG) are compositionally biased toward basic and acidic residues. The disordered stretch occupies residues 23-503 (HNTESESSEE…QDDNDCQDGY (481 aa)). Positions 54–63 (QASPEGQANS) are enriched in polar residues. Positions 98 to 119 (KEDDEDDSGDDTFGDEDNDLGP) are enriched in acidic residues. The segment covering 138 to 150 (DTTQSSEDSTSQE) has biased composition (low complexity). The segment covering 158-175 (SDSKDHDSEDEADSRPEA) has biased composition (basic and acidic residues). Residues 203-215 (SEFDDEGMQSDDP) are compositionally biased toward acidic residues. 3 stretches are compositionally biased toward basic and acidic residues: residues 233-243 (RSEESKGDHEP), 267-286 (HVSEEDYRGELTDSNSRETQ), and 293-303 (TASKEESRSES). Residues 332 to 348 (EPSQESSSESQEGVTSE) are compositionally biased toward low complexity. The short motif at 350 to 352 (RGD) is the Cell attachment site element. Asparagine 356 carries an N-linked (GlcNAc...) asparagine glycan. The segment covering 362–373 (DQEDSESSEEDS) has biased composition (acidic residues). Asparagine 394 is a glycosylation site (N-linked (GlcNAc...) asparagine). Residues 407–418 (AQDGDSSSQEGL) are compositionally biased toward polar residues. The segment covering 419–435 (QSQSASTESRSQESQSE) has biased composition (low complexity). A glycan (N-linked (GlcNAc...) asparagine) is linked at asparagine 457. A compositionally biased stretch (basic and acidic residues) spans 467 to 492 (EDIRPKNMEADSRKLIVDAYHNKPIG). Acidic residues predominate over residues 493 to 503 (DQDDNDCQDGY).

As to quaternary structure, interacts with importin alpha. Post-translationally, phosphorylated in the cytosol and extracellular matrix and unphosphorylated in the nucleus. Phosphorylation is necessary for nucleocytoplasmic transport and may be catalyzed by a nuclear isoform of CK2 and can be augmented by calcium. Phosphorylated (in vitro) by FAM20C in the extracellular medium at sites within the S-x-E/pS motif. Expressed in tooth particularly in odontoblast, ameloblast and cementoblast. Also expressed in bone particularly in osteoblast.

Its subcellular location is the nucleus. It is found in the cytoplasm. It localises to the secreted. The protein localises to the extracellular space. The protein resides in the extracellular matrix. Functionally, may have a dual function during osteoblast differentiation. In the nucleus of undifferentiated osteoblasts, unphosphorylated form acts as a transcriptional component for activation of osteoblast-specific genes like osteocalcin. During the osteoblast to osteocyte transition phase it is phosphorylated and exported into the extracellular matrix, where it regulates nucleation of hydroxyapatite. The chain is Dentin matrix acidic phosphoprotein 1 from Mus musculus (Mouse).